A 361-amino-acid polypeptide reads, in one-letter code: Phosphoserine aminotransferase (361 aa).

An L-glutamate-binding site is contributed by arginine 43. Pyridoxal 5'-phosphate is bound by residues 77–78 (AS), tryptophan 103, threonine 153, aspartate 172, and glutamine 195. N6-(pyridoxal phosphate)lysine is present on lysine 196. Pyridoxal 5'-phosphate is bound at residue 237-238 (NT).

Belongs to the class-V pyridoxal-phosphate-dependent aminotransferase family. SerC subfamily. As to quaternary structure, homodimer. It depends on pyridoxal 5'-phosphate as a cofactor.

Its subcellular location is the cytoplasm. It carries out the reaction O-phospho-L-serine + 2-oxoglutarate = 3-phosphooxypyruvate + L-glutamate. It catalyses the reaction 4-(phosphooxy)-L-threonine + 2-oxoglutarate = (R)-3-hydroxy-2-oxo-4-phosphooxybutanoate + L-glutamate. It functions in the pathway amino-acid biosynthesis; L-serine biosynthesis; L-serine from 3-phospho-D-glycerate: step 2/3. Its pathway is cofactor biosynthesis; pyridoxine 5'-phosphate biosynthesis; pyridoxine 5'-phosphate from D-erythrose 4-phosphate: step 3/5. Its function is as follows. Catalyzes the reversible conversion of 3-phosphohydroxypyruvate to phosphoserine and of 3-hydroxy-2-oxo-4-phosphonooxybutanoate to phosphohydroxythreonine. This Desulfotalea psychrophila (strain LSv54 / DSM 12343) protein is Phosphoserine aminotransferase.